The chain runs to 115 residues: U3-lycotoxin-Ls1p (115 aa).

The signal sequence occupies residues 1-20 (MKFVLLFGVLLVTLFSYSSA). Residues 21 to 44 (EMFDDFDQADEDELLSLIEKEEAR) constitute a propeptide that is removed on maturation. 4 disulfides stabilise this stretch: cysteine 48-cysteine 63, cysteine 55-cysteine 72, cysteine 62-cysteine 87, and cysteine 74-cysteine 85.

It belongs to the neurotoxin 19 (CSTX) family. 01 subfamily. As to expression, expressed by the venom gland.

The protein resides in the secreted. The chain is U3-lycotoxin-Ls1p from Lycosa singoriensis (Wolf spider).